Here is a 384-residue protein sequence, read N- to C-terminus: Tryptophan--tRNA ligase (384 aa).

Residues 81 to 89 (PSGPMHIGH) carry the 'HIGH' region motif. A 'KMSKS' region motif is present at residues 252–256 (KMSAS).

It belongs to the class-I aminoacyl-tRNA synthetase family.

The protein localises to the cytoplasm. It catalyses the reaction tRNA(Trp) + L-tryptophan + ATP = L-tryptophyl-tRNA(Trp) + AMP + diphosphate + H(+). The sequence is that of Tryptophan--tRNA ligase from Thermococcus kodakarensis (strain ATCC BAA-918 / JCM 12380 / KOD1) (Pyrococcus kodakaraensis (strain KOD1)).